A 395-amino-acid chain; its full sequence is Subtilisin-like protease 5 (395 aa).

The signal sequence occupies residues 1-19; it reads MGFLTVLYLSLAALSVTNA. Residues 20–115 constitute a propeptide that is removed on maturation; sequence AQIMSAPNGA…VEPDAIISQH (96 aa). The region spanning 36–112 is the Inhibitor I9 domain; that stretch reads YIVVMKDDTS…VAFVEPDAII (77 aa). One can recognise a Peptidase S8 domain in the interval 124-395; that stretch reads PWGLSRLSNR…RRLLYNGSGR (272 aa). Residues Asp155 and His186 each act as charge relay system in the active site. N-linked (GlcNAc...) asparagine glycosylation is found at Asn229 and Asn247. Ser341 acts as the Charge relay system in catalysis. Positions 374–395 are disordered; that stretch reads QPTIHNPGPDTTRRLLYNGSGR. N-linked (GlcNAc...) asparagine glycosylation is present at Asn391.

This sequence belongs to the peptidase S8 family.

It localises to the secreted. Functionally, secreted subtilisin-like serine protease with keratinolytic activity that contributes to pathogenicity. This Arthroderma otae (strain ATCC MYA-4605 / CBS 113480) (Microsporum canis) protein is Subtilisin-like protease 5 (SUB5).